A 325-amino-acid polypeptide reads, in one-letter code: Cell division protein ZipA (325 aa).

Over 1–5 (MQELR) the chain is Periplasmic. A helical membrane pass occupies residues 6 to 26 (LVLILVGALAIAALLFHGLWT). The Cytoplasmic portion of the chain corresponds to 27–325 (SRKETSSKFG…KQRVKVFCRK (299 aa)).

This sequence belongs to the ZipA family. Interacts with FtsZ via their C-terminal domains.

The protein resides in the cell inner membrane. Its function is as follows. Essential cell division protein that stabilizes the FtsZ protofilaments by cross-linking them and that serves as a cytoplasmic membrane anchor for the Z ring. Also required for the recruitment to the septal ring of downstream cell division proteins. This is Cell division protein ZipA from Aliivibrio fischeri (strain MJ11) (Vibrio fischeri).